We begin with the raw amino-acid sequence, 969 residues long: RNA polymerase-associated protein RapA (969 aa).

In terms of domain architecture, Helicase ATP-binding spans glutamate 164 to aspartate 334. Aspartate 177 to threonine 184 provides a ligand contact to ATP. Residues aspartate 280–histidine 283 carry the DEAH box motif. One can recognise a Helicase C-terminal domain in the interval arginine 492–lysine 679.

This sequence belongs to the SNF2/RAD54 helicase family. RapA subfamily. Interacts with the RNAP. Has a higher affinity for the core RNAP than for the holoenzyme. Its ATPase activity is stimulated by binding to RNAP.

Transcription regulator that activates transcription by stimulating RNA polymerase (RNAP) recycling in case of stress conditions such as supercoiled DNA or high salt concentrations. Probably acts by releasing the RNAP, when it is trapped or immobilized on tightly supercoiled DNA. Does not activate transcription on linear DNA. Probably not involved in DNA repair. This Vibrio atlanticus (strain LGP32) (Vibrio splendidus (strain Mel32)) protein is RNA polymerase-associated protein RapA.